The following is a 715-amino-acid chain: Protein sneaky (715 aa).

Over 1-32 the chain is Cytoplasmic; sequence MLSLLTRPFLPIFCFLYGPQSEGSTRIQCLRR. A helical transmembrane segment spans residues 33 to 53; the sequence is FVTFLLGLVLGFLLWKLAALN. The Extracellular portion of the chain corresponds to 54 to 66; that stretch reads FTLGRLFVNGATD. The helical transmembrane segment at 67-87 threads the bilayer; sequence LYVFIIFVLVTGTIFMLSLPV. At 88-109 the chain is on the cytoplasmic side; it reads RAVILLIFVALVGKSGRTYLRA. A helical transmembrane segment spans residues 110 to 130; the sequence is VAFAFIISGPIANLVENAGEV. At 131–373 the chain is on the extracellular side; it reads ARVFVCTTVL…FERQKRIFNK (243 aa). The chain crosses the membrane as a helical span at residues 374-394; it reads VMGILQKILCLFMLRMVYVSI. Residues 395–457 are Cytoplasmic-facing; sequence NYYVKYLNDV…FSRTHHESTT (63 aa). Residues 458 to 478 traverse the membrane as a helical segment; that stretch reads VCFNLLQFLLELVTAGLFILI. Topologically, residues 479–553 are extracellular; that stretch reads DHLVVELLQI…NAHVLPKKMY (75 aa). Residues 554 to 574 traverse the membrane as a helical segment; that stretch reads YQLILLYLIIIVLIYQSTTFL. Over 575–715 the chain is Cytoplasmic; sequence RMRRVICSFF…VEVYTYRKEK (141 aa). The RING-type; degenerate zinc finger occupies 655 to 691; the sequence is CMICRGLEDSTFTVCGNCGLPYCDDCAEDLNSVCFQC.

In terms of tissue distribution, specifically expressed in testis.

It is found in the cytoplasmic vesicle. Its subcellular location is the secretory vesicle. The protein resides in the acrosome membrane. The protein localises to the cytoplasm. It localises to the cytoplasmic vesicle membrane. Functionally, component of the sperm acrosome membrane. Required for breakdown of the sperm plasma membrane after sperm entry into the egg, which is an essential prerequisite for successful fertilization. This Drosophila melanogaster (Fruit fly) protein is Protein sneaky.